We begin with the raw amino-acid sequence, 210 residues long: MNASQVAGEEAPQSGHSVKVVLVGDGGCGKTSLMMVFAKGAFPESYSPTVFERYNATLQMKGKPVHLQIWDTAGQDDYDRLRPLFYPDANVLLLCFDVTNPNSFDNVSNRWYPEVTHFCKGVPIIVVGCKIDLRKDKVLVNNLRKKRLEPVTYHRGHDMARSVGAVAYLECSARLHDNVEAVFQEAAEVALSSRRHNFWRRITQNCCLAT.

Position 24 to 31 (24 to 31 (GDGGCGKT)) interacts with GTP. Residues 46-54 (YSPTVFERY) carry the Effector region motif. GTP contacts are provided by residues 71–75 (DTAGQ) and 129–132 (CKID). Position 207 is a cysteine methyl ester (Cys207). Cys207 carries the S-geranylgeranyl cysteine lipid modification. Residues 208 to 210 (LAT) constitute a propeptide, removed in mature form.

This sequence belongs to the small GTPase superfamily. Rho family. Interacts with PAK5. Interacts (in GTP-bound form) with DAPK3, FILIP1 and WHAMM. Interacts (independent of GTP-loaded status) with ANKFY1. Widely expressed.

The protein localises to the cell membrane. It is found in the early endosome. Its function is as follows. Involved in endosome dynamics. May coordinate membrane transport with the function of the cytoskeleton. Involved in the internalization and trafficking of activated tyrosine kinase receptors such as PDGFRB. Participates in the reorganization of actin cytoskeleton; the function seems to involve WHAMM and includes regulation of filopodia formation and actin filament bundling. Can modulate the effect of DAPK3 in reorganization of actin cytoskeleton and focal adhesion dissolution. This Mus musculus (Mouse) protein is Rho-related GTP-binding protein RhoD (Rhod).